Reading from the N-terminus, the 223-residue chain is MSRIPIHSLLNPSESCKSISNVPSNYRDLSTFNKERAKVITTFQEMFYSMLENNDDYNKIESLIRNFQPKLTWSHKCESLTFKQKAYLTAIIQKSIKSLLVLLKEKGKMREIEFSRKEVRKINKYRQSSKNFESVNIKILTQDLMHSNNNEFKKGKRFLKSHIQLLENWYSMNRRNPYLAENDLAYISKNTTLTKTQIKNWLANRRRKDKITEVSSDIRNILN.

A DNA-binding region (homeobox; TALE-type) is located at residues 151–213 (EFKKGKRFLK…NRRRKDKITE (63 aa)).

Belongs to the TALE/M-ATYP homeobox family. In terms of assembly, forms a heterodimer with A1.

The protein localises to the nucleus. Mating type proteins are sequence specific DNA-binding proteins that act as master switches in yeast differentiation by controlling gene expression in a cell type-specific fashion. Transcriptional corepressor that acts in conjunction with A1 to repress transcription of haploid-specific genes. This is Mating-type protein ALPHA2 (HMLALPHA2) from Kluyveromyces lactis (strain ATCC 8585 / CBS 2359 / DSM 70799 / NBRC 1267 / NRRL Y-1140 / WM37) (Yeast).